The chain runs to 317 residues: MSAVAPDGRKMLRLEVRNSQTPIERKPEWIKTRAKMGPEYTKMQNLVKSEGLHTVCQEAGCPNIYECWEDREATFLIGGDQCTRRCDFCQIDTGKPEALDRDEPRRVGESVVTMDLNYATITGVARDDLPDGGAWLYAETVRQIHEQTAGREAGRTKVELLAPDFNAVPELLREVFESRPEVFAHNVETVPRIFKRIRPGFRYERSLKVITDARDFGLVTKSNLILGMGETREEISEALKQLHEAGCELITITQYLRPSVRHHPVERWVKPQEFVELKEEAEQIGFSGVMSGPLVRSSYRAGRLYGMAMEQRRSATV.

Residues C56, C61, C67, C82, C86, C89, and S298 each contribute to the [4Fe-4S] cluster site. Positions 68–287 (WEDREATFLI…KEEAEQIGFS (220 aa)) constitute a Radical SAM core domain.

This sequence belongs to the radical SAM superfamily. Lipoyl synthase family. [4Fe-4S] cluster serves as cofactor.

It is found in the cytoplasm. It carries out the reaction [[Fe-S] cluster scaffold protein carrying a second [4Fe-4S](2+) cluster] + N(6)-octanoyl-L-lysyl-[protein] + 2 oxidized [2Fe-2S]-[ferredoxin] + 2 S-adenosyl-L-methionine + 4 H(+) = [[Fe-S] cluster scaffold protein] + N(6)-[(R)-dihydrolipoyl]-L-lysyl-[protein] + 4 Fe(3+) + 2 hydrogen sulfide + 2 5'-deoxyadenosine + 2 L-methionine + 2 reduced [2Fe-2S]-[ferredoxin]. It functions in the pathway protein modification; protein lipoylation via endogenous pathway; protein N(6)-(lipoyl)lysine from octanoyl-[acyl-carrier-protein]: step 2/2. Catalyzes the radical-mediated insertion of two sulfur atoms into the C-6 and C-8 positions of the octanoyl moiety bound to the lipoyl domains of lipoate-dependent enzymes, thereby converting the octanoylated domains into lipoylated derivatives. This is Lipoyl synthase from Streptomyces coelicolor (strain ATCC BAA-471 / A3(2) / M145).